Reading from the N-terminus, the 397-residue chain is Phosphoglycerate kinase (397 aa).

Substrate contacts are provided by residues 21–23 (DFN), Arg-37, 60–63 (HLGR), Arg-119, and Arg-152. ATP is bound by residues Lys-202, Gly-294, Glu-325, and 351–354 (GGDS).

It belongs to the phosphoglycerate kinase family. In terms of assembly, monomer.

It localises to the cytoplasm. The enzyme catalyses (2R)-3-phosphoglycerate + ATP = (2R)-3-phospho-glyceroyl phosphate + ADP. Its pathway is carbohydrate degradation; glycolysis; pyruvate from D-glyceraldehyde 3-phosphate: step 2/5. The polypeptide is Phosphoglycerate kinase (Pseudothermotoga lettingae (strain ATCC BAA-301 / DSM 14385 / NBRC 107922 / TMO) (Thermotoga lettingae)).